Here is a 305-residue protein sequence, read N- to C-terminus: GMP synthase [glutamine-hydrolyzing] subunit B (305 aa).

Residues 2-184 form the GMPS ATP-PPase domain; sequence VKPEKFIPKA…LKLPDEICER (183 aa). 29–35 lines the ATP pocket; that stretch reads SGGVDSS.

In terms of assembly, heterodimer composed of a glutamine amidotransferase subunit (A) and a GMP-binding subunit (B).

It carries out the reaction XMP + L-glutamine + ATP + H2O = GMP + L-glutamate + AMP + diphosphate + 2 H(+). It participates in purine metabolism; GMP biosynthesis; GMP from XMP (L-Gln route): step 1/1. Its function is as follows. Catalyzes the synthesis of GMP from XMP. The chain is GMP synthase [glutamine-hydrolyzing] subunit B from Methanosarcina barkeri (strain Fusaro / DSM 804).